The following is a 587-amino-acid chain: MVAAAMLLRSCPVLSKGPTGLLGKVAKTYQFLFGIGRCPILATQGPTCSQIHLKATKAGADSPSWTKSHCPFMLSELQDRKSKIVQRAAPEVQEDVKTFKTDLLSFMESTTRSQSVPRFQDPEQTGGAPPLLIQNNMTGSQAFGYDQFFRDKIMEKKQDHTYRVFKTVNRWANAYPFAQHFSEASMDSKDVSVWCSNDYLGISRHPRVLQAIEETLKNHGAGAGGTRNISGTSKFHVELEQELAELHHKDSALLFSSCFVANDSTLFTLAKLLPGCEIYSDAGNHASMIQGIRNSGAVKFVFRHNDPGHLKKLLEKSDPKTPKIVAFETVHSMDGAICPLEELCDVAHQYGALTFVDEVHAVGLYGTRGAGIGERDGIMHKLDIISGTLGKAFGCVGGYIASTRDLVDMVRSYAAGFIFTTSLPPMVLSGALESVRLLKGEEGQALRRAHQRNVKHMRQLLMDRGFPVIPCPSHIIPIRVGNAALNSKICDLLLAKHSIYVQAINYPTVPRGEELLRLAPSPHHSPQMMENFVEKLLLAWTEVGLPLQDVSVAACNFCRRPVHFELMSEWERSYFGNMGPQYVTTYA.

Residues 1 to 49 (MVAAAMLLRSCPVLSKGPTGLLGKVAKTYQFLFGIGRCPILATQGPTCS) constitute a mitochondrion transit peptide. Position 163 (arginine 163) interacts with succinyl-CoA. Residues cysteine 258 and phenylalanine 259 each coordinate pyridoxal 5'-phosphate. Serine 280 and lysine 299 together coordinate succinyl-CoA. Positions 332, 360, and 388 each coordinate pyridoxal 5'-phosphate. Residue lysine 391 is part of the active site. N6-(pyridoxal phosphate)lysine is present on lysine 391. Threonine 420 and threonine 421 together coordinate pyridoxal 5'-phosphate. Residue threonine 508 coordinates succinyl-CoA.

The protein belongs to the class-II pyridoxal-phosphate-dependent aminotransferase family. As to quaternary structure, homodimer. Interacts with SUCLA2. Pyridoxal 5'-phosphate is required as a cofactor. Erythroid-specific.

It localises to the mitochondrion inner membrane. The enzyme catalyses succinyl-CoA + glycine + H(+) = 5-aminolevulinate + CO2 + CoA. Its pathway is porphyrin-containing compound metabolism; protoporphyrin-IX biosynthesis; 5-aminolevulinate from glycine: step 1/1. Its function is as follows. Catalyzes the pyridoxal 5'-phosphate (PLP)-dependent condensation of succinyl-CoA and glycine to form aminolevulinic acid (ALA), with CoA and CO2 as by-products. Contributes significantly to heme formation during erythropoiesis. This Rattus norvegicus (Rat) protein is 5-aminolevulinate synthase, erythroid-specific, mitochondrial (Alas2).